The chain runs to 575 residues: Isocitrate dehydrogenase kinase/phosphatase (575 aa).

ATP is bound by residues 315–321 (APGVKGM) and Lys336. Residue Asp371 is part of the active site.

Belongs to the AceK family.

It is found in the cytoplasm. The catalysed reaction is L-seryl-[isocitrate dehydrogenase] + ATP = O-phospho-L-seryl-[isocitrate dehydrogenase] + ADP + H(+). Its function is as follows. Bifunctional enzyme which can phosphorylate or dephosphorylate isocitrate dehydrogenase (IDH) on a specific serine residue. This is a regulatory mechanism which enables bacteria to bypass the Krebs cycle via the glyoxylate shunt in response to the source of carbon. When bacteria are grown on glucose, IDH is fully active and unphosphorylated, but when grown on acetate or ethanol, the activity of IDH declines drastically concomitant with its phosphorylation. This is Isocitrate dehydrogenase kinase/phosphatase from Yersinia pseudotuberculosis serotype I (strain IP32953).